A 273-amino-acid chain; its full sequence is Putative phosphoenolpyruvate synthase regulatory protein (273 aa).

153–160 (GVSRSGKT) contributes to the ADP binding site.

This sequence belongs to the pyruvate, phosphate/water dikinase regulatory protein family. PSRP subfamily.

The enzyme catalyses [pyruvate, water dikinase] + ADP = [pyruvate, water dikinase]-phosphate + AMP + H(+). The catalysed reaction is [pyruvate, water dikinase]-phosphate + phosphate + H(+) = [pyruvate, water dikinase] + diphosphate. Bifunctional serine/threonine kinase and phosphorylase involved in the regulation of the phosphoenolpyruvate synthase (PEPS) by catalyzing its phosphorylation/dephosphorylation. The sequence is that of Putative phosphoenolpyruvate synthase regulatory protein from Verminephrobacter eiseniae (strain EF01-2).